Consider the following 176-residue polypeptide: MVKTAQLLQTLNDQLSELAALVAPLAEHATLSPRFDRQLFHTRSTLMQAYLAEAQHNFNQLRQAVERQQLPQVVWIAERLAAQIAALRRETATWSLRSWDHASPTLSRWQRRRLQHQEYERRLLAMRDQRQRQLAQATSLDEQQRLGKEVEAYSGRLARCRQALDKIENVLARLTR.

The protein belongs to the PriC family. As to quaternary structure, component of the replication restart primosome, which is composed of PriA, PriB, PriC, DnaB and DnaT; DnaG primase associates transiently with this complex. Interacts with the C-terminus of SSB; this interaction is required to load the main replicative helicase onto substrate replication forks. Interacts with helicase DnaB alone and in the DnaB-DnaC complex, probably 1:1 binding with DnaB. Interacts with DnaT.

Involved in the restart of stalled replication forks, which reloads the DnaB replicative helicase on sites other than the origin of replication. Recognizes abandoned replication forks and remodels DNA single-stranded binding protein (SSB) on ssDNA to uncover a loading site for DnaB. There are several restart pathways, the PriA-PriC pathway is a minor restart pathway. Part of the minor PriC-Rep pathway for restart of stalled replication forks, which has a different substrate specificity than PriA. Part of the major restart pathway with PriA, PriB, DnaB, DnaT and DnaG primase. priB and priC have redundant roles in the cell. Binds 7-9 nucleotides of single-stranded (ss)DNA. The protein is Replication restart protein PriC of Klebsiella pneumoniae subsp. pneumoniae (strain ATCC 700721 / MGH 78578).